Here is a 1068-residue protein sequence, read N- to C-terminus: Tricorn protease homolog (1068 aa).

The interval 61-326 is six-bladed beta propeller; that stretch reads MKAYYMYPDI…DSLTKLDINL (266 aa). The tract at residues 338–686 is seven-bladed beta propeller; the sequence is VNVMEYMNEA…RKGGVIDLSR (349 aa). A C-1 region spans residues 692–762; it reads EPEKEWRQML…RTSHSYETAY (71 aa). His756 acts as the Charge relay system in catalysis. The tract at residues 771–864 is PDZ-like; it reads SVGGLGAEFE…RVTVKVLKDE (94 aa). Residues 865–1068 are C-2; it reads RFLIYRYWVE…TAIELALKQL (204 aa). Residue Gly927 participates in substrate binding. The active-site Nucleophile is Ser974. The active-site Charge relay system is Glu1032.

It belongs to the peptidase S41B family.

The protein resides in the cytoplasm. Degrades oligopeptides in a sequential manner. The protein is Tricorn protease homolog (tri) of Saccharolobus solfataricus (strain ATCC 35092 / DSM 1617 / JCM 11322 / P2) (Sulfolobus solfataricus).